The following is a 167-amino-acid chain: LIM domain transcription factor LMO4.1 (167 aa).

Polar residues predominate over residues 1–17 (MVNNRVTESTTTAVSSN). Residues 1-20 (MVNNRVTESTTTAVSSNGGP) are disordered. 2 consecutive LIM zinc-binding domains span residues 22–84 (KACA…LFGS) and 86–148 (GACS…GLLS).

Its function is as follows. Acts as a positive cofactor of GATA transcription factors to establish the identity of the ventral mesoderm during gastrulation. Down-regulation in the dorsal mesoderm is necessary for the proper formation of this territory since, when present, lmo4 may bind ldb1 and restrict the availability of this cofactor for Spemman organizer transcription factors. At neurula stages, suppresses primary neuron differentiation and modulates gene expression at the Isthmic Organizer of the midbrain-hindbrain boundary. The protein is LIM domain transcription factor LMO4.1 (lmo4.1) of Xenopus tropicalis (Western clawed frog).